The primary structure comprises 95 residues: Small ribosomal subunit protein bS6 (95 aa).

It belongs to the bacterial ribosomal protein bS6 family.

Binds together with bS18 to 16S ribosomal RNA. This is Small ribosomal subunit protein bS6 from Geobacillus sp. (strain WCH70).